A 294-amino-acid polypeptide reads, in one-letter code: N-acetylmuramic acid 6-phosphate etherase (294 aa).

Residues 54–217 (VIASFRKGGR…STTSMIGVGK (164 aa)) form the SIS domain. Residue glutamate 82 is the Proton donor of the active site. Glutamate 113 is an active-site residue.

The protein belongs to the GCKR-like family. MurNAc-6-P etherase subfamily. In terms of assembly, homodimer.

The catalysed reaction is N-acetyl-D-muramate 6-phosphate + H2O = N-acetyl-D-glucosamine 6-phosphate + (R)-lactate. Its pathway is amino-sugar metabolism; N-acetylmuramate degradation. Its function is as follows. Specifically catalyzes the cleavage of the D-lactyl ether substituent of MurNAc 6-phosphate, producing GlcNAc 6-phosphate and D-lactate. The polypeptide is N-acetylmuramic acid 6-phosphate etherase (Exiguobacterium sp. (strain ATCC BAA-1283 / AT1b)).